Consider the following 463-residue polypeptide: Aurantioclavine synthase cnsA (463 aa).

Residues 16-199 (ERFNQRGNVF…TQATVRVFPD (184 aa)) form the FAD-binding PCMH-type domain.

This sequence belongs to the oxygen-dependent FAD-linked oxidoreductase family. It depends on FAD as a cofactor.

Its pathway is alkaloid biosynthesis. FAD-linked oxidoreductase; part of the gene cluster that mediates the biosynthesis of communesins, a prominent class of indole alkaloids with great potential as pharmaceuticals. Communesins are biosynthesized by the coupling of tryptamine and aurantioclavine, two building blocks derived from L-tryptophan. The L-tryptophan decarboxylase cnsB converts L-tryptophan to tryptamine, whereas the tryptophan dimethylallyltransferase cnsF converts L-tryptophan to 4-dimethylallyl tryptophan which is further transformed to aurantioclavine by the aurantioclavine synthase cnsA, probably aided by the catalase cnsD. The cytochrome P450 monooxygenase cnsC catalyzes the heterodimeric coupling between the two different indole moieties, tryptamine and aurantioclavine, to construct vicinal quaternary stereocenters and yield the heptacyclic communesin scaffold. The O-methyltransferase cnsE then methylates the communesin scaffold to produce communesin K, the simplest characterized communesin that contains the heptacyclic core. The dioxygenase cnsJ converts communesin K into communesin I. Acylation to introduce the hexadienyl group at position N16 of communesin I by the acyltransferase cnsK leads to the production of communesin B. The hexadienyl group is produced by the highly reducing polyketide synthase cnsI, before being hydrolytically removed from cnsI by the serine hydrolase cnsH, converted into hexadienyl-CoA by the CoA ligase cnsG, and then transferred to communesin I by cnsK. Surprisingly, cnsK may also be a promiscuous acyltransferase that can tolerate a range of acyl groups, including acetyl-, propionyl-, and butyryl-CoA, which lead to communesins A, G and H respectively. The roles of the alpha-ketoglutarate-dependent dioxygenases cnsM and cnsP have still to be determined. The protein is Aurantioclavine synthase cnsA of Penicillium expansum (Blue mold rot fungus).